A 475-amino-acid chain; its full sequence is Membrane-bound lytic murein transglycosylase F (475 aa).

The first 15 residues, 1-15, serve as a signal peptide directing secretion; the sequence is MKKLLLILCCITLLA. The non-LT domain stretch occupies residues 16–258; that stretch reads ACQKVVVEQE…HLNEKYFAHV (243 aa). The LT domain stretch occupies residues 259 to 475; sequence KRFDYVDTRA…KTEAAQPQQP (217 aa). Residue Glu303 is part of the active site.

It in the N-terminal section; belongs to the bacterial solute-binding protein 3 family. The protein in the C-terminal section; belongs to the transglycosylase Slt family.

The protein localises to the cell outer membrane. It catalyses the reaction Exolytic cleavage of the (1-&gt;4)-beta-glycosidic linkage between N-acetylmuramic acid (MurNAc) and N-acetylglucosamine (GlcNAc) residues in peptidoglycan, from either the reducing or the non-reducing ends of the peptidoglycan chains, with concomitant formation of a 1,6-anhydrobond in the MurNAc residue.. In terms of biological role, murein-degrading enzyme that degrades murein glycan strands and insoluble, high-molecular weight murein sacculi, with the concomitant formation of a 1,6-anhydromuramoyl product. Lytic transglycosylases (LTs) play an integral role in the metabolism of the peptidoglycan (PG) sacculus. Their lytic action creates space within the PG sacculus to allow for its expansion as well as for the insertion of various structures such as secretion systems and flagella. In Shewanella halifaxensis (strain HAW-EB4), this protein is Membrane-bound lytic murein transglycosylase F.